Consider the following 260-residue polypeptide: tRNA pseudouridine synthase A (260 aa).

D51 (nucleophile) is an active-site residue. Y109 lines the substrate pocket.

This sequence belongs to the tRNA pseudouridine synthase TruA family. In terms of assembly, homodimer.

It carries out the reaction uridine(38/39/40) in tRNA = pseudouridine(38/39/40) in tRNA. In terms of biological role, formation of pseudouridine at positions 38, 39 and 40 in the anticodon stem and loop of transfer RNAs. The protein is tRNA pseudouridine synthase A of Methylibium petroleiphilum (strain ATCC BAA-1232 / LMG 22953 / PM1).